Here is a 125-residue protein sequence, read N- to C-terminus: Large-conductance mechanosensitive channel (125 aa).

2 helical membrane passes run 15–35 (MDLA…NSLV) and 67–87 (GSFL…FFLI).

It belongs to the MscL family. Homopentamer.

The protein resides in the cell membrane. In terms of biological role, channel that opens in response to stretch forces in the membrane lipid bilayer. May participate in the regulation of osmotic pressure changes within the cell. The chain is Large-conductance mechanosensitive channel from Lactobacillus gasseri (strain ATCC 33323 / DSM 20243 / BCRC 14619 / CIP 102991 / JCM 1131 / KCTC 3163 / NCIMB 11718 / NCTC 13722 / AM63).